The primary structure comprises 597 residues: Aspartate--tRNA(Asp/Asn) ligase (597 aa).

Glu178 lines the L-aspartate pocket. An aspartate region spans residues 202–205; that stretch reads QLFK. Arg224 is a binding site for L-aspartate. Residues 224-226 and Gln233 each bind ATP; that span reads RDE. Position 458 (His458) interacts with L-aspartate. Glu488 serves as a coordination point for ATP. Position 495 (Arg495) interacts with L-aspartate. Residue 540–543 coordinates ATP; that stretch reads GLDR.

The protein belongs to the class-II aminoacyl-tRNA synthetase family. Type 1 subfamily. Homodimer.

It localises to the cytoplasm. The catalysed reaction is tRNA(Asx) + L-aspartate + ATP = L-aspartyl-tRNA(Asx) + AMP + diphosphate. Aspartyl-tRNA synthetase with relaxed tRNA specificity since it is able to aspartylate not only its cognate tRNA(Asp) but also tRNA(Asn). Reaction proceeds in two steps: L-aspartate is first activated by ATP to form Asp-AMP and then transferred to the acceptor end of tRNA(Asp/Asn). The polypeptide is Aspartate--tRNA(Asp/Asn) ligase (Cyanothece sp. (strain PCC 7425 / ATCC 29141)).